A 78-amino-acid polypeptide reads, in one-letter code: Small ribosomal subunit protein bS18 (78 aa).

Belongs to the bacterial ribosomal protein bS18 family. As to quaternary structure, part of the 30S ribosomal subunit. Forms a tight heterodimer with protein bS6.

Functionally, binds as a heterodimer with protein bS6 to the central domain of the 16S rRNA, where it helps stabilize the platform of the 30S subunit. The chain is Small ribosomal subunit protein bS18 from Geobacillus kaustophilus (strain HTA426).